The chain runs to 245 residues: Syntaxin-61 (245 aa).

Topologically, residues 1–224 are cytoplasmic; the sequence is MSSAQDPFYI…VMKKAGAKGQ (224 aa). Residues 153–215 form the t-SNARE coiled-coil homology domain; that stretch reads MLLIKQQDEE…EFVQKKVGMV (63 aa). A helical; Anchor for type IV membrane protein transmembrane segment spans residues 225 to 245; it reads MMMICFLLVLFIILFVLVFLT.

This sequence belongs to the syntaxin family. In terms of assembly, interacts with VTI12 and either SYP41, SYP42 or SYP51 in the trans-Golgi network or with VTI11 and SYP51 in the prevacuolar compartment to form t-SNARE complexes. Core constituent of the SNARE complex required for membrane fusion at the trans-Golgi network. Also observed in the SYP121-complex and cellulose synthases. Colocalizes with PIP2-7 and SYP121 in trafficking vesicles and at the plasma membrane. Interacts with SYP121 and PIP2-7. As to expression, expressed in root, leaf, stem, flower and silique, but not in hypocotyl or young leaf. Strong expression in the vasculature and in guard cells of the leaf epidermis.

Its subcellular location is the golgi apparatus. It is found in the trans-Golgi network membrane. The protein resides in the prevacuolar compartment membrane. Vesicle trafficking protein that functions in the secretory pathway; the fusion of phospholipid vesicles containing SYP61 and VTI12 is triggered by YKT61 and YKT62. Together with VTI12, required for membrane fusion. Involved in osmotic stress tolerance and in abscisic acid (ABA) regulation of stomatal responses. Plays a role in the exocytic trafficking of cellulose synthases (CESAs) and the transport of cell wall components to the plasma membrane. Together with SYP121, regulates the post-Golgi trafficking of the aquaporin PIP2-7 to the plasma membrane, thus modulating cell membrane water permeability. The protein is Syntaxin-61 of Arabidopsis thaliana (Mouse-ear cress).